The chain runs to 219 residues: Proteasome subunit beta type-9 (219 aa).

The propeptide at 1–20 (MLRAGAPTGDLPRAGEVHTG) is removed in mature form. T21 serves as the catalytic Nucleophile. An N6-acetyllysine mark is found at K53 and K109.

It belongs to the peptidase T1B family. As to quaternary structure, the 26S proteasome consists of a 20S proteasome core and two 19S regulatory subunits. The 20S proteasome core is composed of 28 subunits that are arranged in four stacked rings, resulting in a barrel-shaped structure. The two end rings are each formed by seven alpha subunits, and the two central rings are each formed by seven beta subunits. The catalytic chamber with the active sites is on the inside of the barrel. Component of the immunoproteasome, where it displaces the equivalent housekeeping subunit PSMB6. Component of the spermatoproteasome, a form of the proteasome specifically found in testis. In terms of assembly, (Microbial infection) Interacts with HIV-1 TAT protein. Post-translationally, autocleaved. The resulting N-terminal Thr residue of the mature subunit is responsible for the nucleophile proteolytic activity.

It is found in the cytoplasm. The protein localises to the nucleus. The enzyme catalyses Cleavage of peptide bonds with very broad specificity.. In terms of biological role, the proteasome is a multicatalytic proteinase complex which is characterized by its ability to cleave peptides with Arg, Phe, Tyr, Leu, and Glu adjacent to the leaving group at neutral or slightly basic pH. The proteasome has an ATP-dependent proteolytic activity. This subunit is involved in antigen processing to generate class I binding peptides. Replacement of PSMB6 by PSMB9 increases the capacity of the immunoproteasome to cleave model peptides after hydrophobic and basic residues. This is Proteasome subunit beta type-9 (PSMB9) from Homo sapiens (Human).